We begin with the raw amino-acid sequence, 223 residues long: Uracil-DNA glycosylase (223 aa).

Residue Asp66 is the Proton acceptor of the active site.

The protein belongs to the uracil-DNA glycosylase (UDG) superfamily. UNG family.

The protein resides in the cytoplasm. It catalyses the reaction Hydrolyzes single-stranded DNA or mismatched double-stranded DNA and polynucleotides, releasing free uracil.. Its function is as follows. Excises uracil residues from the DNA which can arise as a result of misincorporation of dUMP residues by DNA polymerase or due to deamination of cytosine. This is Uracil-DNA glycosylase from Sulfurimonas denitrificans (strain ATCC 33889 / DSM 1251) (Thiomicrospira denitrificans (strain ATCC 33889 / DSM 1251)).